Consider the following 340-residue polypeptide: UDP-N-acetylglucosamine--N-acetylmuramyl-(pentapeptide) pyrophosphoryl-undecaprenol N-acetylglucosamine transferase (340 aa).

UDP-N-acetyl-alpha-D-glucosamine is bound by residues 15 to 17, N127, S184, I230, and Q275; that span reads TGG.

It belongs to the glycosyltransferase 28 family. MurG subfamily.

It localises to the cell inner membrane. It catalyses the reaction di-trans,octa-cis-undecaprenyl diphospho-N-acetyl-alpha-D-muramoyl-L-alanyl-D-glutamyl-meso-2,6-diaminopimeloyl-D-alanyl-D-alanine + UDP-N-acetyl-alpha-D-glucosamine = di-trans,octa-cis-undecaprenyl diphospho-[N-acetyl-alpha-D-glucosaminyl-(1-&gt;4)]-N-acetyl-alpha-D-muramoyl-L-alanyl-D-glutamyl-meso-2,6-diaminopimeloyl-D-alanyl-D-alanine + UDP + H(+). It participates in cell wall biogenesis; peptidoglycan biosynthesis. Functionally, cell wall formation. Catalyzes the transfer of a GlcNAc subunit on undecaprenyl-pyrophosphoryl-MurNAc-pentapeptide (lipid intermediate I) to form undecaprenyl-pyrophosphoryl-MurNAc-(pentapeptide)GlcNAc (lipid intermediate II). This Vesicomyosocius okutanii subsp. Calyptogena okutanii (strain HA) protein is UDP-N-acetylglucosamine--N-acetylmuramyl-(pentapeptide) pyrophosphoryl-undecaprenol N-acetylglucosamine transferase.